The sequence spans 467 residues: L-seryl-tRNA(Sec) selenium transferase (467 aa).

At Lys-298 the chain carries N6-(pyridoxal phosphate)lysine.

The protein belongs to the SelA family. The cofactor is pyridoxal 5'-phosphate.

It localises to the cytoplasm. It carries out the reaction L-seryl-tRNA(Sec) + selenophosphate + H(+) = L-selenocysteinyl-tRNA(Sec) + phosphate. The protein operates within aminoacyl-tRNA biosynthesis; selenocysteinyl-tRNA(Sec) biosynthesis; selenocysteinyl-tRNA(Sec) from L-seryl-tRNA(Sec) (bacterial route): step 1/1. Its function is as follows. Converts seryl-tRNA(Sec) to selenocysteinyl-tRNA(Sec) required for selenoprotein biosynthesis. The sequence is that of L-seryl-tRNA(Sec) selenium transferase from Alkaliphilus oremlandii (strain OhILAs) (Clostridium oremlandii (strain OhILAs)).